The sequence spans 109 residues: UPF0235 protein MA_4097 (109 aa).

The protein belongs to the UPF0235 family.

This chain is UPF0235 protein MA_4097, found in Methanosarcina acetivorans (strain ATCC 35395 / DSM 2834 / JCM 12185 / C2A).